The primary structure comprises 243 residues: Segregation and condensation protein A (243 aa).

It belongs to the ScpA family. In terms of assembly, component of a cohesin-like complex composed of ScpA, ScpB and the Smc homodimer, in which ScpA and ScpB bind to the head domain of Smc. The presence of the three proteins is required for the association of the complex with DNA.

The protein localises to the cytoplasm. Functionally, participates in chromosomal partition during cell division. May act via the formation of a condensin-like complex containing Smc and ScpB that pull DNA away from mid-cell into both cell halves. The chain is Segregation and condensation protein A from Halothermothrix orenii (strain H 168 / OCM 544 / DSM 9562).